A 617-amino-acid chain; its full sequence is Proline--tRNA ligase (617 aa).

It belongs to the class-II aminoacyl-tRNA synthetase family. ProS type 1 subfamily. In terms of assembly, homodimer.

The protein resides in the cytoplasm. It catalyses the reaction tRNA(Pro) + L-proline + ATP = L-prolyl-tRNA(Pro) + AMP + diphosphate. In terms of biological role, catalyzes the attachment of proline to tRNA(Pro) in a two-step reaction: proline is first activated by ATP to form Pro-AMP and then transferred to the acceptor end of tRNA(Pro). As ProRS can inadvertently accommodate and process non-cognate amino acids such as alanine and cysteine, to avoid such errors it has two additional distinct editing activities against alanine. One activity is designated as 'pretransfer' editing and involves the tRNA(Pro)-independent hydrolysis of activated Ala-AMP. The other activity is designated 'posttransfer' editing and involves deacylation of mischarged Ala-tRNA(Pro). The misacylated Cys-tRNA(Pro) is not edited by ProRS. This chain is Proline--tRNA ligase, found in Streptococcus pneumoniae (strain ATCC BAA-255 / R6).